The sequence spans 99 residues: U1-theraphotoxin-Tal1a (99 aa).

A signal peptide spans 1-22 (MNTIQVIIFAVVLVLTVTVGQA). A propeptide spanning residues 23-57 (DEDSAETSLLRKLKEAEASLFGQHLEESQHSREKR) is cleaved from the precursor. Cystine bridges form between Cys-58–Cys-73, Cys-65–Cys-78, and Cys-72–Cys-93. At Ser-98 the chain carries Serine amide.

The protein belongs to the neurotoxin 14 (magi-1) family. 08 (Ltx-4) subfamily. Expressed by the venom gland.

It localises to the secreted. Insecticidal toxin that shows strong lethal effects on American cockroaches (P.americana) and common mealbeetle (T.molitor). Possibly acts by blocking ion channel currents. Also shows significant analgesic effects in mice models of pain including abdominal writhing induced by acetic acid and formalin-induced paw licking tests. In addition, exerts marked inhibition of proliferation of some human tumor cell lines including C8166, Molt-4, A-549, BIU-87, T24, and Calu-6. The sequence is that of U1-theraphotoxin-Tal1a from Tliltocatl albopilosus (Curlyhair tarantula).